We begin with the raw amino-acid sequence, 350 residues long: 4-hydroxy-3-methylbut-2-en-1-yl diphosphate synthase (flavodoxin) (350 aa).

Residues cysteine 263, cysteine 266, cysteine 298, and glutamate 305 each coordinate [4Fe-4S] cluster.

The protein belongs to the IspG family. [4Fe-4S] cluster is required as a cofactor.

The catalysed reaction is (2E)-4-hydroxy-3-methylbut-2-enyl diphosphate + oxidized [flavodoxin] + H2O + 2 H(+) = 2-C-methyl-D-erythritol 2,4-cyclic diphosphate + reduced [flavodoxin]. It participates in isoprenoid biosynthesis; isopentenyl diphosphate biosynthesis via DXP pathway; isopentenyl diphosphate from 1-deoxy-D-xylulose 5-phosphate: step 5/6. Functionally, converts 2C-methyl-D-erythritol 2,4-cyclodiphosphate (ME-2,4cPP) into 1-hydroxy-2-methyl-2-(E)-butenyl 4-diphosphate. This is 4-hydroxy-3-methylbut-2-en-1-yl diphosphate synthase (flavodoxin) from Nautilia profundicola (strain ATCC BAA-1463 / DSM 18972 / AmH).